Consider the following 274-residue polypeptide: Insulin-like growth factor-binding protein-like 1 (274 aa).

A signal peptide spans 1–21 (MPRSPGLFLLLLVLQPLPALG). Positions 30–105 (RNPECGPCRP…PEGTGLCVCA (76 aa)) constitute an IGFBP N-terminal domain. Disulfide bonds link Cys34–Cys59, Cys37–Cys61, Cys42–Cys62, Cys48–Cys65, Cys73–Cys87, Cys81–Cys102, and Cys111–Cys147. Residues 91–149 (AAGAAPEGTGLCVCAQRGSVCGSDGRSYPSVCALRLRARQAPRALPGHLHKARDGPCEF) form the Kazal-like domain. The Ig-like C2-type domain occupies 151–255 (PVVITPPQSV…GEAQSHGTVT (105 aa)). Asn162 carries N-linked (GlcNAc...) asparagine glycosylation. The cysteines at positions 172 and 239 are disulfide-linked.

The protein resides in the secreted. In terms of biological role, IGF-binding proteins prolong the half-life of IGFs and have been shown to either inhibit or stimulate the growth promoting effects of the IGFs in cell culture. They alter the interaction of IGFs with their cell surface receptors. This Bos taurus (Bovine) protein is Insulin-like growth factor-binding protein-like 1 (IGFBPL1).